A 349-amino-acid polypeptide reads, in one-letter code: UDP-3-O-acylglucosamine N-acyltransferase (349 aa).

The active-site Proton acceptor is the His246.

This sequence belongs to the transferase hexapeptide repeat family. LpxD subfamily. As to quaternary structure, homotrimer.

It catalyses the reaction a UDP-3-O-[(3R)-3-hydroxyacyl]-alpha-D-glucosamine + a (3R)-hydroxyacyl-[ACP] = a UDP-2-N,3-O-bis[(3R)-3-hydroxyacyl]-alpha-D-glucosamine + holo-[ACP] + H(+). It functions in the pathway bacterial outer membrane biogenesis; LPS lipid A biosynthesis. Catalyzes the N-acylation of UDP-3-O-acylglucosamine using 3-hydroxyacyl-ACP as the acyl donor. Is involved in the biosynthesis of lipid A, a phosphorylated glycolipid that anchors the lipopolysaccharide to the outer membrane of the cell. The sequence is that of UDP-3-O-acylglucosamine N-acyltransferase from Trichormus variabilis (strain ATCC 29413 / PCC 7937) (Anabaena variabilis).